A 433-amino-acid chain; its full sequence is Serine carboxypeptidase-like 8 (433 aa).

The first 19 residues, 1–19 (MSLKIKFLLLLVLYHHVDS), serve as a signal peptide directing secretion. Disulfide bonds link Cys-78–Cys-323, Cys-241–Cys-255, and Cys-279–Cys-289. An N-linked (GlcNAc...) asparagine glycan is attached at Asn-99. Ser-173 is a catalytic residue. 3 N-linked (GlcNAc...) asparagine glycosylation sites follow: Asn-283, Asn-324, and Asn-342. Catalysis depends on residues Asp-358 and His-411. Asn-418 carries an N-linked (GlcNAc...) asparagine glycan.

It belongs to the peptidase S10 family. N-glycosylated. In terms of tissue distribution, highly expressed in seedlings. Expressed in leaves, stems, flowers and siliques, and at low levels in roots.

It localises to the vacuole. It carries out the reaction 1-O-(trans-sinapoyl)-beta-D-glucose + (S)-malate = sinapoyl (S)-malate + D-glucose. It catalyses the reaction 2 1-O-(trans-sinapoyl)-beta-D-glucose = 1,2-di-O-sinapoyl beta-D-glucose + D-glucose. Its activity is regulated as follows. 95% inhibition by diisopropyl fluorophosphate (DFP) and 30% by phenylmethylsulfonyl fluoride (PMSF). Functionally, involved in plants secondary metabolism. Functions as acyltransferase to form the sinapate ester sinapoylmalate. Also capable of catalyzing the formation of 1,2-bis-O-sinapoyl beta-D-glucoside. The protein is Serine carboxypeptidase-like 8 of Arabidopsis thaliana (Mouse-ear cress).